Here is a 441-residue protein sequence, read N- to C-terminus: uncharacterized protein (441 aa).

This is an uncharacterized protein from Methanocaldococcus jannaschii (strain ATCC 43067 / DSM 2661 / JAL-1 / JCM 10045 / NBRC 100440) (Methanococcus jannaschii).